The primary structure comprises 365 residues: Outer capsid protein sigma-3 (365 aa).

The CCHC-type zinc-finger motif lies at 51–73; sequence CMHCLGVVGSLQRKLKHLPHHRC.

The protein belongs to the orthoreovirus sigma-3 protein family. As to quaternary structure, heterohexamer of three sigma-3 and three Mu-1 proteins. The RNA-binding form is probably a homodimer. In terms of processing, cleaved during virus the endosomal proteolytic disassembly of the outer capsid.

The protein resides in the virion. Its function is as follows. Stimulates translation by blocking the activation of the dsRNA-dependent protein kinase EIF2AK2/PKR, thereby inhibiting the host interferon response. Sigma3 prevents the activation of EIF2AK2 by competing with the kinase for dsRNA-binding. In terms of biological role, the viral outer shell polypeptides, of which sigma-3 is one, impose structural constraints that prevent elongation of nascent transcripts by the RNA-dependent RNA polymerase lambda-3. This is Outer capsid protein sigma-3 (S4) from Mammalia (T1L).